Consider the following 93-residue polypeptide: Bombyxin-related peptide B (93 aa).

An N-terminal signal peptide occupies residues 1–21 (MKFVLVLVSLALLVSLASVQG). 3 disulfides stabilise this stretch: C25–C80, C37–C93, and C79–C84. Positions 47-71 (SGAMGAAAMYGTRGWRWAAMGGNRG) are cleaved as a propeptide — c peptide like.

Belongs to the insulin family. As to quaternary structure, heterodimer of a B chain and an A chain linked by two disulfide bonds. Located in 4 pairs of medial neurosecretory cells in the brain.

The protein resides in the secreted. This chain is Bombyxin-related peptide B, found in Agrius convolvuli (Convolvulus hawk-moth).